Here is a 389-residue protein sequence, read N- to C-terminus: Methylthioribose kinase (389 aa).

ATP-binding positions include asparagine 37, lysine 52, and 106 to 108 (EDL). Aspartate 224 serves as a coordination point for substrate. An ATP-binding site is contributed by 241–243 (DPE). Arginine 331 serves as a coordination point for substrate.

This sequence belongs to the methylthioribose kinase family. In terms of assembly, homodimer.

The catalysed reaction is 5-(methylsulfanyl)-D-ribose + ATP = 5-(methylsulfanyl)-alpha-D-ribose 1-phosphate + ADP + H(+). It participates in amino-acid biosynthesis; L-methionine biosynthesis via salvage pathway; S-methyl-5-thio-alpha-D-ribose 1-phosphate from S-methyl-5'-thioadenosine (hydrolase route): step 2/2. Functionally, catalyzes the phosphorylation of methylthioribose into methylthioribose-1-phosphate. The protein is Methylthioribose kinase of Exiguobacterium sibiricum (strain DSM 17290 / CCUG 55495 / CIP 109462 / JCM 13490 / 255-15).